Here is a 111-residue protein sequence, read N- to C-terminus: N-alpha-acetyltransferase 38-B, NatC auxiliary subunit (111 aa).

Residues 28-106 (TARHKLESLL…IVSIQVELET (79 aa)) form the Sm domain.

Belongs to the snRNP Sm proteins family. As to quaternary structure, component of the N-terminal acetyltransferase C (NatC) complex, which is composed of naa35, naa38 and naa30.

Its subcellular location is the cytoplasm. In terms of biological role, auxillary component of the N-terminal acetyltransferase C (NatC) complex which catalyzes acetylation of N-terminal methionine residues. This is N-alpha-acetyltransferase 38-B, NatC auxiliary subunit (naa38-b) from Xenopus laevis (African clawed frog).